The primary structure comprises 450 residues: Chromosomal replication initiator protein DnaA (450 aa).

The tract at residues 1 to 69 (MHDVWRQATE…VGALSVTAGK (69 aa)) is domain I, interacts with DnaA modulators. The domain II stretch occupies residues 69-113 (KKYFIELVVQEEDQNAEVPQAEDLIIKGHQEIEQPVTSQPETSSS). The segment at 114–330 (SLNPKYTFEL…GMLIRLGAYS (217 aa)) is domain III, AAA+ region. G158, G160, K161, and S162 together coordinate ATP. Positions 331-450 (SLQGIPITLD…IEDIKLILLK (120 aa)) are domain IV, binds dsDNA.

Belongs to the DnaA family. As to quaternary structure, oligomerizes as a right-handed, spiral filament on DNA at oriC.

It is found in the cytoplasm. Its function is as follows. Plays an essential role in the initiation and regulation of chromosomal replication. ATP-DnaA binds to the origin of replication (oriC) to initiate formation of the DNA replication initiation complex once per cell cycle. Binds the DnaA box (a 9 base pair repeat at the origin) and separates the double-stranded (ds)DNA. Forms a right-handed helical filament on oriC DNA; dsDNA binds to the exterior of the filament while single-stranded (ss)DNA is stabiized in the filament's interior. The ATP-DnaA-oriC complex binds and stabilizes one strand of the AT-rich DNA unwinding element (DUE), permitting loading of DNA polymerase. After initiation quickly degrades to an ADP-DnaA complex that is not apt for DNA replication. Binds acidic phospholipids. In Pelobacter propionicus (strain DSM 2379 / NBRC 103807 / OttBd1), this protein is Chromosomal replication initiator protein DnaA.